The chain runs to 89 residues: Small ribosomal subunit protein uS15 (89 aa).

It belongs to the universal ribosomal protein uS15 family. In terms of assembly, part of the 30S ribosomal subunit. Forms a bridge to the 50S subunit in the 70S ribosome, contacting the 23S rRNA.

Functionally, one of the primary rRNA binding proteins, it binds directly to 16S rRNA where it helps nucleate assembly of the platform of the 30S subunit by binding and bridging several RNA helices of the 16S rRNA. In terms of biological role, forms an intersubunit bridge (bridge B4) with the 23S rRNA of the 50S subunit in the ribosome. This chain is Small ribosomal subunit protein uS15, found in Beutenbergia cavernae (strain ATCC BAA-8 / DSM 12333 / CCUG 43141 / JCM 11478 / NBRC 16432 / NCIMB 13614 / HKI 0122).